The sequence spans 95 residues: Co-chaperonin GroES (95 aa).

Belongs to the GroES chaperonin family. As to quaternary structure, heptamer of 7 subunits arranged in a ring. Interacts with the chaperonin GroEL.

The protein resides in the cytoplasm. Its function is as follows. Together with the chaperonin GroEL, plays an essential role in assisting protein folding. The GroEL-GroES system forms a nano-cage that allows encapsulation of the non-native substrate proteins and provides a physical environment optimized to promote and accelerate protein folding. GroES binds to the apical surface of the GroEL ring, thereby capping the opening of the GroEL channel. The chain is Co-chaperonin GroES from Cereibacter sphaeroides (strain ATCC 17025 / ATH 2.4.3) (Rhodobacter sphaeroides).